The chain runs to 986 residues: MIKDCILRYQRVLGKRVHDQPGYDTHGLPIEVATEKLLGISNKQEIIDKIGVETFINKCKEFALSNADKMTQNFKNVGVFMDWERPYYTLDPSYISSSWSVIKKAYEKGMLDKGTAVLHWCPRCETTLSDYEVSEYRDLEDPSIYVKFKIKGEKNRYLLIWTTTPWTIPSNVFVMINKDYDYADVEVNGEILVIAKDRVEAVMKEASITNYKILRTYKGSELIGIKYEHPLREFVSAQTKLDDFHQVVDAGNIVTLTDGTGLVHSATGHGEEDFTVGQKYGFPVVMFVNDRGEFTEEGGKYKGLKVRDASKAIISDLKSKNTLFFEGKIVHRYPVCWRCKTPLILRAIDQWFIRVTKIKDKMLNEIEKVNWIPDWGKSRISNMVKELRDWVISRQRFWGTPLPIWICERCNNVMVVGSKEELESIAIDPVPNDLHRPWIDNVRVKCNKCGGVAKRIPDVADVWFDSGVAFFASLGKDWQEKWKELGPVDLVLEGHDQLRGWFFSLLRSGLILLDRAPYTSVLVHGFMLDEQGREMHKSLGNYVEPSVVVEKYGRDILRLWLLRNTTWEDAKFSWKALELTKRDLQIIWNTFVFASMYMNLDNFEPDKYTLDDIIKYAKIEDLWILSRFNSMLKKVNESMKDYKVHEMTNYLINFLIEDVSRFYIRLIRKRAWIEANTQDKIAMYYILYYILKQWIILASTIIPFISEKIYKSFVVNAKESVSMESSINYDERFIDNELERAFEVAREINEASLNARAKAGIKLRWPLAKVYIFIENEDTLAKVGRIKDVLISMLNAKDIEISKIEGFKSFSKYKVEPNRSIIGKEYKSMSPKIVEYIENNRDIIAMDILNKKQHVAKIDNFDIILNASYVIISEETVEGFISSKFSKGIVVISKEISESEEEEGLIRDIIRRIQFMRKQLKLNVLDYIEISMKVPEERVKTIQKWEEFIKSETRASNIILGEAKGDITMDWDIEGESYIIGIKKST.

Residues 534–538 (EMHKS) carry the 'KMSKS' region motif. Lysine 537 lines the ATP pocket.

The protein belongs to the class-I aminoacyl-tRNA synthetase family. IleS type 2 subfamily. As to quaternary structure, monomer. Requires Zn(2+) as cofactor.

The protein localises to the cytoplasm. It catalyses the reaction tRNA(Ile) + L-isoleucine + ATP = L-isoleucyl-tRNA(Ile) + AMP + diphosphate. Its function is as follows. Catalyzes the attachment of isoleucine to tRNA(Ile). As IleRS can inadvertently accommodate and process structurally similar amino acids such as valine, to avoid such errors it has two additional distinct tRNA(Ile)-dependent editing activities. One activity is designated as 'pretransfer' editing and involves the hydrolysis of activated Val-AMP. The other activity is designated 'posttransfer' editing and involves deacylation of mischarged Val-tRNA(Ile). This chain is Isoleucine--tRNA ligase (ileS), found in Saccharolobus solfataricus (strain ATCC 35092 / DSM 1617 / JCM 11322 / P2) (Sulfolobus solfataricus).